The chain runs to 1330 residues: MDFPAAQPKPAADGKIIYYPPGVKETTDKITNDEVVKRLKMVVKTFMDMDQDSEDEKQQYLPLALHLASEFFLRNPNKDVRLLVACCLADIFRIYAPEAPYTSHDKLKDIFLFITRQLKGLEDTKSPQFNRYFYLLENLAWVKSYNICFELEDCNEIFIQLFRTLFSVINNSHNQKVQMHMLDLMSSIIMEGDGVTQELLDSILINLIPAHKNLNKQAFDLAKVLLKRTVQTIEPCIANFFNQVLVLGKSSVSDLSEHVFDLILELFAIDPHLLLSVMPQLEFKLKSNDGEERLAVVRLLAKLFGSKDSDLATQNRPLWQCFLGRFNDIHVPVRLESVKFASHCLMNHPDLAKDLTEYLKVRSHDPEEAIRHDVIVTIITAGKRDLSLVNDQLLGFVRERTLDKRWRVRKEAMMGLAQLYKKYCLHAEAGKDAAEKVSWIKDKLLHIYYQNSIDDKLLVEKIFAQYLVPHNLETEERMKCLYYLYASLDPNAVKALNEMWKCQNMLRSHVRELLDLHKQPTSEANSAAMFGKLMTIAKNLPDPGKAQDFVKKFNQVLGDDEKLRSQLELLISPTCSCKQADVCVREIARKLANPKQPTNPFLEMVKFLLERIAPVHIDSEAISALVKLMNKSIEGTADDEEEGVSPDTAIRAGLELLKVLSFTHPTSFHSAETYESLLQCLRMEDDKVAEAAIQIFRNTGHKIETDLPQIRSTLIPILHQKAKRGTPHQAKQAVHCIHAIFSNKEVQLAQIFEPLSRSLNADVPEQLITPLVSLGHISMLAPDQFASPMKSVVANFVVKDLLMNDRSTGEKNGKLWSPDEEVSPEVLAKVQAIKLLVRWLLGMKNNQSKSANSTLRLLSAMLVSEGDLTEQKRISKSDMSRLRLAAGSAIMKLAQEPCYHEIITPEQFQLCALVINDECYQVRQIFAQKLHKALVKLLLPLEYMAIFALCAKDPVKERRAHARQCLLKNISIRREYIKQNPMANEKLLSLLPEYVVPYMIHLLAHDPDFTKPQDVDQLRDVKECLWFMLEVLMTKNENNSHAFMKKMAENIKLTRDAQSPDEPKANEKLYTVCDVALCVINSKSALCNADSPKDPVLPTKFFTQPEKDFSNDRNYISEETRVLLLTGKPKPTGVLDTVNKPLSATGRRPYIRTTGSETGSNISVNSELSSSAGNRSREQSSDISETGVSENDENPVRIISVTPAKTEPVKNKEINSDQATQGNSTERGKKRTATASGTENIHQKAEENNADETGPSLAAKTRRGRPPKPEPQGTTAKNEETNKPPVRGRKRAAASQESPGSLEAGNAKAPKQQDTAKKPAAAQRQIDLQR.

The HEAT repeat unit spans residues 387 to 423; it reads SLVNDQLLGFVRERTLDKRWRVRKEAMMGLAQLYKKY. Residues 1138–1330 are disordered; sequence VNKPLSATGR…AAQRQIDLQR (193 aa). The segment covering 1160 to 1171 has biased composition (low complexity); that stretch reads SNISVNSELSSS. The segment covering 1216–1225 has biased composition (polar residues); that stretch reads SDQATQGNST.

It belongs to the PDS5 family. In terms of assembly, interacts with the cohesin complex. Binds chromatin in a cohesin-dependent manner.

The protein resides in the nucleus. In terms of biological role, may regulate sister chromatid cohesion during mitosis and couple it to DNA replication. The sequence is that of Sister chromatid cohesion protein PDS5 homolog A from Gallus gallus (Chicken).